Reading from the N-terminus, the 323-residue chain is MITLITHVINPLAYIVPVLLAVAFLTLLERKVLGYMQLRKGPNIVGPYGLLQPIADGLKLFIKETVRPSTSSPFLFLATPMLALTLALTLWAPMPIPYPVTDLNLGVLFVLALSSLAVYSILGSGWASNSKYALIGELRAVAQTISYEVSLGLILLSVIIITGGFTLQTFNVAQESIWLLVPAWPLAAMWYISTLAETNRAPFDLTEGESELVSGFNVEYAGGPFALFFLAEYANILLMNTLSAVLFLGASHIPAFPELTALNLMTKAALLSVVFLWVRASYPRFRYDQLMHLVWKSFLPLTLALVLWHLALPIALAGLPPQL.

Transmembrane regions (helical) follow at residues Val8–Leu28, Phe74–Met94, Leu105–Gly125, Ile145–Phe165, Ser176–Ala196, Ile236–Phe256, Glu258–Val278, and Phe298–Gly318.

This sequence belongs to the complex I subunit 1 family.

It is found in the mitochondrion inner membrane. It catalyses the reaction a ubiquinone + NADH + 5 H(+)(in) = a ubiquinol + NAD(+) + 4 H(+)(out). Core subunit of the mitochondrial membrane respiratory chain NADH dehydrogenase (Complex I) that is believed to belong to the minimal assembly required for catalysis. Complex I functions in the transfer of electrons from NADH to the respiratory chain. The immediate electron acceptor for the enzyme is believed to be ubiquinone. The polypeptide is NADH-ubiquinone oxidoreductase chain 1 (MT-ND1) (Oncorhynchus mykiss (Rainbow trout)).